A 613-amino-acid polypeptide reads, in one-letter code: Secretogranin-2 (613 aa).

The signal sequence occupies residues 1–27; it reads MAEAKTHWLGAVLSLIPLIFLLSEAEA. Residues 28 to 30 constitute a propeptide that is removed on maturation; the sequence is ASF. 2 disordered regions span residues 67–105 and 119–146; these read QQAHKEESSPDYNPYQGVSVPLQQKENGDLPESSRDSLS and QAENEPQSAPKENKPYTLNSEKNFPMDM. The span at 92-105 shows a compositional bias: basic and acidic residues; it reads ENGDLPESSRDSLS. Tyr150 is subject to Sulfotyrosine. Phosphoserine occurs at positions 173, 267, 428, 528, 551, and 552. Residues 257-283 are compositionally biased toward basic and acidic residues; the sequence is ESQTQEEVRDSKENADKTEQINDEMKR. Residues 257-287 are disordered; the sequence is ESQTQEEVRDSKENADKTEQINDEMKRSGQL. A compositionally biased stretch (basic and acidic residues) spans 546 to 557; the sequence is HLSQHSSQETDK. Residues 546-580 are disordered; that stretch reads HLSQHSSQETDKLASVSKRLPVGTPKSDDTPNRPY.

It belongs to the chromogranin/secretogranin protein family. Interacts with Secretogranin III/SCG3. Highest levels detected in anterior pituitary followed by adrenal medulla and posterior pituitary (at protein level). In the brain, high levels are found in the hypothalamus, comparable to those present in posterior pituitary with two- to six-fold lower levels present in the other brain regions investigated including caudate nucleus, hippocampus, thalamus and brainstem (at protein level).

It is found in the secreted. Its function is as follows. Neuroendocrine protein of the granin family that regulates the biogenesis of secretory granules. The chain is Secretogranin-2 (SCG2) from Bos taurus (Bovine).